Reading from the N-terminus, the 184-residue chain is UPF0301 protein RHOS4_26140 (184 aa).

Belongs to the UPF0301 (AlgH) family.

In Cereibacter sphaeroides (strain ATCC 17023 / DSM 158 / JCM 6121 / CCUG 31486 / LMG 2827 / NBRC 12203 / NCIMB 8253 / ATH 2.4.1.) (Rhodobacter sphaeroides), this protein is UPF0301 protein RHOS4_26140.